The chain runs to 360 residues: Photosystem II protein D1 (360 aa).

Over 1 to 28 (MTTTLQRRESANLWERFCNWVTSTDNRL) the chain is Cytoplasmic. Residues 29-46 (YVGWFGVIMIPTLLAATI) form a helical membrane-spanning segment. The Lumenal portion of the chain corresponds to 47–117 (CFVIAFIAAP…NGGPYQLIIF (71 aa)). A chlorophyll a-binding site is contributed by His-118. The chain crosses the membrane as a helical span at residues 118 to 133 (HFLLGASCYMGRQWEL). Pheophytin a is bound by residues Tyr-126 and Gln-130. The Cytoplasmic portion of the chain corresponds to 134 to 141 (SYRLGMRP). Residues 142-156 (WICVAYSAPLASAFA) form a helical membrane-spanning segment. Tyr-147 contacts pheophytin a. The Lumenal segment spans residues 157–196 (VFLIYPIGQGSFSDGMPLGISGTFNFMIVFQAEHNILMHP). Residues Asp-170 and Glu-189 each contribute to the [CaMn4O5] cluster site. Residues 197 to 218 (FHQLGVAGVFGGALFCAMHGSL) traverse the membrane as a helical segment. Chlorophyll a is bound at residue His-198. Met-214 lines the pheophytin a pocket. A quinone-binding positions include His-215 and 264–265 (SF). Position 215 (His-215) interacts with Fe cation. Residues 219 to 273 (VTSSLIRETTETESANYGYKFGQEEETYNIVAAHGYFGRLIFQYASFNNSRSLHF) lie on the Cytoplasmic side of the membrane. His-272 contributes to the Fe cation binding site. A helical membrane pass occupies residues 274-288 (FLAAWRVVGVWFAAL). The Lumenal segment spans residues 289-360 (GISTMAFNLN…VAMIAPSING (72 aa)). [CaMn4O5] cluster contacts are provided by His-332, Glu-333, Asp-342, and Ala-344. Residues 345-360 (SAESAPVAMIAPSING) constitute a propeptide that is removed on maturation.

Belongs to the reaction center PufL/M/PsbA/D family. As to quaternary structure, PSII is composed of 1 copy each of membrane proteins PsbA, PsbB, PsbC, PsbD, PsbE, PsbF, PsbH, PsbI, PsbJ, PsbK, PsbL, PsbM, PsbT, PsbX, PsbY, PsbZ, Psb30/Ycf12, peripheral proteins PsbO, CyanoQ (PsbQ), PsbU, PsbV and a large number of cofactors. It forms dimeric complexes. It depends on The D1/D2 heterodimer binds P680, chlorophylls that are the primary electron donor of PSII, and subsequent electron acceptors. It shares a non-heme iron and each subunit binds pheophytin, quinone, additional chlorophylls, carotenoids and lipids. D1 provides most of the ligands for the Mn4-Ca-O5 cluster of the oxygen-evolving complex (OEC). There is also a Cl(-1) ion associated with D1 and D2, which is required for oxygen evolution. The PSII complex binds additional chlorophylls, carotenoids and specific lipids. as a cofactor. In terms of processing, C-terminally processed by CtpA; processing is essential to allow assembly of the oxygen-evolving complex and thus photosynthetic growth. Tyr-161 forms a radical intermediate that is referred to as redox-active TyrZ, YZ or Y-Z.

The protein localises to the cellular thylakoid membrane. It catalyses the reaction 2 a plastoquinone + 4 hnu + 2 H2O = 2 a plastoquinol + O2. In terms of biological role, photosystem II (PSII) is a light-driven water:plastoquinone oxidoreductase that uses light energy to abstract electrons from H(2)O, generating O(2) and a proton gradient subsequently used for ATP formation. It consists of a core antenna complex that captures photons, and an electron transfer chain that converts photonic excitation into a charge separation. The D1/D2 (PsbA/PsbD) reaction center heterodimer binds P680, the primary electron donor of PSII as well as several subsequent electron acceptors. The chain is Photosystem II protein D1 from Thermostichus vulcanus (Synechococcus vulcanus).